Consider the following 95-residue polypeptide: Large ribosomal subunit protein bL27 (95 aa).

A disordered region spans residues 1–21 (MAHKKGASSSRNGRDSNAQRL). Polar residues predominate over residues 7-19 (ASSSRNGRDSNAQ).

It belongs to the bacterial ribosomal protein bL27 family.

The chain is Large ribosomal subunit protein bL27 from Parafrankia sp. (strain EAN1pec).